We begin with the raw amino-acid sequence, 114 residues long: Histone H2A.Z-specific chaperone chz-1 (114 aa).

Residues 1-22 (MSTENGTTDTTLAGTAEANTPF) show a composition bias toward polar residues. The interval 1–114 (MSTENGTTDT…FVPEDEEMEE (114 aa)) is disordered. The span at 24 to 40 (SKGKGKAAAESEDHPMG) shows a compositional bias: basic and acidic residues. Composition is skewed to acidic residues over residues 41-68 (EAEDDEDDEDEDETEEPEAEEDNLEEID) and 93-114 (PAEEDDEEDDEEFVPEDEEMEE).

The protein belongs to the CHZ1 family. Forms a heterotrimer with H2A.Z-H2B, stabilizing the association of the histone dimer. Also, with a lower affinity, forms a heterotrimer with H2A-H2B.

It localises to the nucleus. Forms a chaperone-bound H2A.Z-H2B complex that acts as a source for SWR1 complex-dependent H2A to H2A.Z histone replacement in chromatin. The polypeptide is Histone H2A.Z-specific chaperone chz-1 (chz-1) (Neurospora crassa (strain ATCC 24698 / 74-OR23-1A / CBS 708.71 / DSM 1257 / FGSC 987)).